Here is a 318-residue protein sequence, read N- to C-terminus: Methionyl-tRNA formyltransferase (318 aa).

A (6S)-5,6,7,8-tetrahydrofolate-binding site is contributed by 112–115; it reads SILP.

It belongs to the Fmt family.

The enzyme catalyses L-methionyl-tRNA(fMet) + (6R)-10-formyltetrahydrofolate = N-formyl-L-methionyl-tRNA(fMet) + (6S)-5,6,7,8-tetrahydrofolate + H(+). Its function is as follows. Attaches a formyl group to the free amino group of methionyl-tRNA(fMet). The formyl group appears to play a dual role in the initiator identity of N-formylmethionyl-tRNA by promoting its recognition by IF2 and preventing the misappropriation of this tRNA by the elongation apparatus. The sequence is that of Methionyl-tRNA formyltransferase from Haemophilus influenzae (strain ATCC 51907 / DSM 11121 / KW20 / Rd).